The sequence spans 226 residues: Prolactin (226 aa).

An N-terminal signal peptide occupies residues 1-29; the sequence is MNSQGSDRKAVTLLLLVMSNLLFCQNAHP. A disulfide bridge connects residues Cys33 and Cys38. Ser53 and Ser117 each carry phosphoserine. 2 disulfides stabilise this stretch: Cys85–Cys201 and Cys218–Cys226.

The protein belongs to the somatotropin/prolactin family. Interacts with PRLR.

The protein resides in the secreted. Functionally, prolactin acts primarily on the mammary gland by promoting lactation. This is Prolactin (PRL) from Mesocricetus auratus (Golden hamster).